A 51-amino-acid chain; its full sequence is Large ribosomal subunit protein eL39 (51 aa).

It belongs to the eukaryotic ribosomal protein eL39 family.

This Pyrobaculum islandicum (strain DSM 4184 / JCM 9189 / GEO3) protein is Large ribosomal subunit protein eL39.